A 561-amino-acid chain; its full sequence is Sperm-tail PG-rich repeat-containing protein 2 (561 aa).

STPGR repeat units follow at residues 21 to 34 (VGPGTYQVPFPKQQ), 63 to 72 (PGPAHYNVSQ), and 97 to 104 (GPGPGSYN). Residues 123-143 (PAVSRNIDIPSIPSSGKSHGY) form a disordered region. STPGR repeat units lie at residues 164-191 (GPAYYNPQFDYPKASLKYKGVNFGNATG), 200-210 (GPGPGQYDIIQ), 250-285 (PGPGKYNIKSEFDMIKSMSALVNSPSFIFFSETERF), 292-299 (TPAPGTYN), 334-367 (LPGPGFYDISTNIVKAQVKKPCLKKQPKTGFGSS), 421-438 (LPAPGRYDVQKSYDMSQV), and 471-481 (GPGPATYSPVL).

This is Sperm-tail PG-rich repeat-containing protein 2 (Stpg2) from Mus musculus (Mouse).